We begin with the raw amino-acid sequence, 227 residues long: KH domain-containing protein MJ0443 (227 aa).

KH domains follow at residues 14-77 (KSIE…RDIV) and 106-163 (DYAS…KEAV).

The sequence is that of KH domain-containing protein MJ0443 from Methanocaldococcus jannaschii (strain ATCC 43067 / DSM 2661 / JAL-1 / JCM 10045 / NBRC 100440) (Methanococcus jannaschii).